A 408-amino-acid polypeptide reads, in one-letter code: Ubiquitin-associated domain-containing protein 1 (408 aa).

Residues 14 to 98 (LRLQVCTMEG…LLLIKKRAPP (85 aa)) enclose the Ubiquitin-like domain. A disordered region spans residues 100-119 (LPKMADVSAEEKRKQEQKAP). Basic and acidic residues predominate over residues 108–119 (AEEKRKQEQKAP). Residues 185–231 (DEDEEDRVDEIALRQLTEMGFPESRAVKALRLNHMSVTQAMEWLIEH) enclose the UBA 1 domain. The tract at residues 235 to 275 (PAVDAPLPGQTPSEAAAEAGASSAEATAGPSSEAGGEEAKD) is disordered. Residues 245-268 (TPSEAAAEAGASSAEATAGPSSEA) are compositionally biased toward low complexity. The UBA 2 domain occupies 291 to 331 (RPDPRAVIALMEMGFDEKEVVDALRVNNNQQNAACEWLLGD). The region spanning 356–395 (NPVVQLGLTNPKTLLAFEDMLENPLNSTQWMNDPETGPVM) is the STI1 domain.

Component of the KPC complex.

It is found in the cytoplasm. It participates in protein modification; protein ubiquitination. Its function is as follows. Non-catalytic component of the KPC complex, a E3 ubiquitin-protein ligase complex that mediates polyubiquitination of target proteins, such as CDKN1B and NFKB1. Within the KPC complex, UBAC1 acts as an adapter that promotes the transfer of target proteins that have been polyubiquitinated by RNF123/KPC1 to the 26S proteasome. This is Ubiquitin-associated domain-containing protein 1 (UBAC1) from Gallus gallus (Chicken).